A 160-amino-acid chain; its full sequence is 2-C-methyl-D-erythritol 2,4-cyclodiphosphate synthase (160 aa).

A divalent metal cation-binding residues include aspartate 11 and histidine 13. Residues 11–13 (DIH) and 37–38 (HS) each bind 4-CDP-2-C-methyl-D-erythritol 2-phosphate. Histidine 45 lines the a divalent metal cation pocket. Residues 59–61 (DIG), 135–138 (TTNE), and arginine 145 contribute to the 4-CDP-2-C-methyl-D-erythritol 2-phosphate site.

This sequence belongs to the IspF family. As to quaternary structure, homotrimer. Requires a divalent metal cation as cofactor.

The catalysed reaction is 4-CDP-2-C-methyl-D-erythritol 2-phosphate = 2-C-methyl-D-erythritol 2,4-cyclic diphosphate + CMP. Its pathway is isoprenoid biosynthesis; isopentenyl diphosphate biosynthesis via DXP pathway; isopentenyl diphosphate from 1-deoxy-D-xylulose 5-phosphate: step 4/6. Its function is as follows. Involved in the biosynthesis of isopentenyl diphosphate (IPP) and dimethylallyl diphosphate (DMAPP), two major building blocks of isoprenoid compounds. Catalyzes the conversion of 4-diphosphocytidyl-2-C-methyl-D-erythritol 2-phosphate (CDP-ME2P) to 2-C-methyl-D-erythritol 2,4-cyclodiphosphate (ME-CPP) with a corresponding release of cytidine 5-monophosphate (CMP). In Nostoc punctiforme (strain ATCC 29133 / PCC 73102), this protein is 2-C-methyl-D-erythritol 2,4-cyclodiphosphate synthase.